Consider the following 404-residue polypeptide: Dihydrolipoyllysine-residue acetyltransferase component of pyruvate dehydrogenase complex (404 aa).

Positions 2 to 78 (PIKILMPALS…PVNSLIAVLS (77 aa)) constitute a Lipoyl-binding domain. Lys43 bears the N6-lipoyllysine mark. The Peripheral subunit-binding (PSBD) domain maps to 128–165 (FASPLAKRLAKIRNIRLESVQGSGPHGRIVKQDILSYS). The active site involves His377.

It belongs to the 2-oxoacid dehydrogenase family. In terms of assembly, forms a 24-polypeptide structural core with octahedral symmetry. It depends on (R)-lipoate as a cofactor.

It carries out the reaction N(6)-[(R)-dihydrolipoyl]-L-lysyl-[protein] + acetyl-CoA = N(6)-[(R)-S(8)-acetyldihydrolipoyl]-L-lysyl-[protein] + CoA. The pyruvate dehydrogenase complex catalyzes the overall conversion of pyruvate to acetyl-CoA and CO(2). It contains multiple copies of three enzymatic components: pyruvate dehydrogenase (E1), dihydrolipoamide acetyltransferase (E2) and lipoamide dehydrogenase (E3). This is Dihydrolipoyllysine-residue acetyltransferase component of pyruvate dehydrogenase complex (pdhC) from Rickettsia typhi (strain ATCC VR-144 / Wilmington).